Consider the following 191-residue polypeptide: dTTP/UTP pyrophosphatase (191 aa).

Aspartate 70 acts as the Proton acceptor in catalysis.

This sequence belongs to the Maf family. YhdE subfamily. The cofactor is a divalent metal cation.

It is found in the cytoplasm. The catalysed reaction is dTTP + H2O = dTMP + diphosphate + H(+). It carries out the reaction UTP + H2O = UMP + diphosphate + H(+). Its function is as follows. Nucleoside triphosphate pyrophosphatase that hydrolyzes dTTP and UTP. May have a dual role in cell division arrest and in preventing the incorporation of modified nucleotides into cellular nucleic acids. This chain is dTTP/UTP pyrophosphatase, found in Clostridium novyi (strain NT).